The sequence spans 148 residues: Putative pre-16S rRNA nuclease (148 aa).

It belongs to the YqgF nuclease family.

It localises to the cytoplasm. Functionally, could be a nuclease involved in processing of the 5'-end of pre-16S rRNA. This Chlamydia trachomatis serovar L2 (strain ATCC VR-902B / DSM 19102 / 434/Bu) protein is Putative pre-16S rRNA nuclease.